Here is a 344-residue protein sequence, read N- to C-terminus: Uroporphyrinogen decarboxylase (344 aa).

Substrate is bound by residues 29-33, D79, Y153, S208, and H324; that span reads RQAGR.

The protein belongs to the uroporphyrinogen decarboxylase family. In terms of assembly, homodimer.

It is found in the cytoplasm. The catalysed reaction is uroporphyrinogen III + 4 H(+) = coproporphyrinogen III + 4 CO2. Its pathway is porphyrin-containing compound metabolism; protoporphyrin-IX biosynthesis; coproporphyrinogen-III from 5-aminolevulinate: step 4/4. In terms of biological role, catalyzes the decarboxylation of four acetate groups of uroporphyrinogen-III to yield coproporphyrinogen-III. The sequence is that of Uroporphyrinogen decarboxylase from Rhizorhabdus wittichii (strain DSM 6014 / CCUG 31198 / JCM 15750 / NBRC 105917 / EY 4224 / RW1) (Sphingomonas wittichii).